Consider the following 475-residue polypeptide: Zinc finger protein 383 (475 aa).

The KRAB domain maps to 6–77 (VMFSDVSIDF…GRELTRGLCS (72 aa)). C2H2-type zinc fingers lie at residues 170-192 (FECK…QRIH), 198-220 (YECK…LKIH), 226-248 (FECK…QRIH), 254-276 (YECK…QRIH), 282-304 (YACK…VRIH), 310-332 (YECK…QRIH), 338-360 (YECK…QRIH), 366-388 (YDCK…QRIH), 394-416 (FECL…QRIH), 422-444 (YECN…LRIH), and 450-472 (YNCK…QGIH).

Belongs to the krueppel C2H2-type zinc-finger protein family.

The protein resides in the nucleus. It is found in the cytoplasm. In terms of biological role, may function as a transcriptional repressor, suppressing transcriptional activities mediated by MAPK signaling pathways. The protein is Zinc finger protein 383 (ZNF383) of Macaca fascicularis (Crab-eating macaque).